The following is a 392-amino-acid chain: Sterol methyltransferase-like 3 (392 aa).

A helical transmembrane segment spans residues 20 to 42 (VTPWQAAAGVTAAIFIGSYLWHS).

This sequence belongs to the class I-like SAM-binding methyltransferase superfamily. Erg6/SMT family.

Its subcellular location is the microsome membrane. Its function is as follows. Unable to convert squalene, botryococcene, cycloartenol, zymosterol or lanosterol to mono-, di-, tri- or tetramethylated derivatives. This chain is Sterol methyltransferase-like 3 (SMT-3), found in Botryococcus braunii (Green alga).